The primary structure comprises 193 residues: dCTP deaminase (193 aa).

DCTP is bound by residues 110-115 (RSSLAR), aspartate 128, 136-138 (VLE), tyrosine 171, lysine 178, and glutamine 182. The Proton donor/acceptor role is filled by glutamate 138. The interval 174–193 (RKNAKYKDQQEAVASRISQD) is disordered.

The protein belongs to the dCTP deaminase family. In terms of assembly, homotrimer.

It carries out the reaction dCTP + H2O + H(+) = dUTP + NH4(+). It participates in pyrimidine metabolism; dUMP biosynthesis; dUMP from dCTP (dUTP route): step 1/2. Catalyzes the deamination of dCTP to dUTP. In Shewanella sp. (strain W3-18-1), this protein is dCTP deaminase.